A 170-amino-acid polypeptide reads, in one-letter code: MSQLPLELGLSFNGGDILFQLLAMLILLALLKKYALGPLLNIMKQREDHIAGEITSAEEKNKEAQQLIEEQRVLLKEARQESQTLIENAKKLGEKQKEEIIQAARAESERLKEAARTEIVKEKEQAVSALREQVASLSVMIASKVIEKELDEQAQEKLIQDYLKEVGESR.

A helical transmembrane segment spans residues 15-37; it reads GDILFQLLAMLILLALLKKYALG.

This sequence belongs to the ATPase B chain family. F-type ATPases have 2 components, F(1) - the catalytic core - and F(0) - the membrane proton channel. F(1) has five subunits: alpha(3), beta(3), gamma(1), delta(1), epsilon(1). F(0) has three main subunits: a(1), b(2) and c(10-14). The alpha and beta chains form an alternating ring which encloses part of the gamma chain. F(1) is attached to F(0) by a central stalk formed by the gamma and epsilon chains, while a peripheral stalk is formed by the delta and b chains. The F(1)F(0) complex interacts with SpoIIIJ and YqjG; YqgA is found in the same complex.

It localises to the cell membrane. Its function is as follows. F(1)F(0) ATP synthase produces ATP from ADP in the presence of a proton or sodium gradient. F-type ATPases consist of two structural domains, F(1) containing the extramembraneous catalytic core and F(0) containing the membrane proton channel, linked together by a central stalk and a peripheral stalk. During catalysis, ATP synthesis in the catalytic domain of F(1) is coupled via a rotary mechanism of the central stalk subunits to proton translocation. Functionally, component of the F(0) channel, it forms part of the peripheral stalk, linking F(1) to F(0). This chain is ATP synthase subunit b, found in Bacillus subtilis (strain 168).